The chain runs to 58 residues: Single-pass membrane and coiled-coil domain-containing protein 4 homolog (58 aa).

Residues 1–31 (MRQLKGKVKETRKQKKERKLDNLETQAKIRT) adopt a coiled-coil conformation. Residues 31-51 (TVVLPALGVLAVFLVLFVYLK) traverse the membrane as a helical segment.

It belongs to the SMCO4 family.

It localises to the membrane. This is Single-pass membrane and coiled-coil domain-containing protein 4 homolog from Drosophila melanogaster (Fruit fly).